A 946-amino-acid chain; its full sequence is Protein translocase subunit SecA (946 aa).

ATP is bound by residues Gln87, 105-109 (GEGKT), and Asp524. Disordered stretches follow at residues 872–892 (PEQP…NTGE) and 904–946 (PADT…GRYA). Positions 907–917 (TVEKSERDPNR) are enriched in basic and acidic residues. Zn(2+) is bound by residues Cys930, Cys932, Cys941, and His942. Residues 936–946 (KKYKHCHGRYA) are compositionally biased toward basic residues.

It belongs to the SecA family. In terms of assembly, monomer and homodimer. Part of the essential Sec protein translocation apparatus which comprises SecA, SecYEG and auxiliary proteins SecDF-YajC and YidC. It depends on Zn(2+) as a cofactor.

It localises to the cell inner membrane. The protein resides in the cytoplasm. The enzyme catalyses ATP + H2O + cellular proteinSide 1 = ADP + phosphate + cellular proteinSide 2.. In terms of biological role, part of the Sec protein translocase complex. Interacts with the SecYEG preprotein conducting channel. Has a central role in coupling the hydrolysis of ATP to the transfer of proteins into and across the cell membrane, serving both as a receptor for the preprotein-SecB complex and as an ATP-driven molecular motor driving the stepwise translocation of polypeptide chains across the membrane. This Rhodopseudomonas palustris (strain BisB5) protein is Protein translocase subunit SecA.